The chain runs to 556 residues: MSMLKDPSQKYRPFSAINLPDRTWPSKTITEVPIWCSSDLRDGNQSLIEPMDAAKKMRFFKTLVQVGLKQIEVAFPSASDTDFNFVRELIEGNHIPDDVTIQVLTQAREDLITRTFESLRGAKKAIVHVYNATAPSFRRIVFNQDKQGVVDIATNAAKLIKKLAAEQPETQWSFQYSPEIFSSTELEFSVEVCNAVIDVWQPTPDNKIILNLPATVECATPNVYADQIEWFGRHVDKRDSVIISLHTHNDRGTGVAATELGLMAGADRVEGCLFGNGERTGNVDLVTLALNMYTQGLHPQLDFSDIDAVRKVVEECNQLPVHPRHPYVGDLVHTAFSGSHQDAIRKGFAQQKEDAIWEVPYLPIDPADIGRDYEAVIRVNSQSGKGGITFLLEQEYGISLPRRMQIEFSQVVQGETDRLGLEMTAQQIYSLLENEYLKATSPYVLASHRLQEENGTSAVDLEVSFDGEKQHWRGIGKGPLEALVAALPVKAEIMDYHEHAIGAGANAKAAAYIEIRLEGQRPLHGIGIDENITTASFRALFSALNRAVTQAEAKAA.

The Pyruvate carboxyltransferase domain maps to 33-307; it reads PIWCSSDLRD…HPQLDFSDID (275 aa). Positions 42, 246, 248, and 282 each coordinate Mg(2+). Residues 439 to 556 are regulatory domain; it reads ATSPYVLASH…AVTQAEAKAA (118 aa).

This sequence belongs to the alpha-IPM synthase/homocitrate synthase family. LeuA type 2 subfamily. In terms of assembly, homodimer. Mg(2+) is required as a cofactor.

Its subcellular location is the cytoplasm. The catalysed reaction is 3-methyl-2-oxobutanoate + acetyl-CoA + H2O = (2S)-2-isopropylmalate + CoA + H(+). The protein operates within amino-acid biosynthesis; L-leucine biosynthesis; L-leucine from 3-methyl-2-oxobutanoate: step 1/4. Its function is as follows. Catalyzes the condensation of the acetyl group of acetyl-CoA with 3-methyl-2-oxobutanoate (2-ketoisovalerate) to form 3-carboxy-3-hydroxy-4-methylpentanoate (2-isopropylmalate). This Pseudomonas aeruginosa (strain ATCC 15692 / DSM 22644 / CIP 104116 / JCM 14847 / LMG 12228 / 1C / PRS 101 / PAO1) protein is 2-isopropylmalate synthase.